The primary structure comprises 1200 residues: DNA polymerase subunit gamma-1 (1200 aa).

2 disordered regions span residues 471-515 (QKKT…RPSM) and 667-688 (MDLSSEVPATAKAKKRNNSSEH). Over residues 472-481 (KKTKISKKQK) the composition is skewed to basic residues. Residues 494 to 512 (LVEDHNEDPGPPTEKEESR) show a composition bias toward basic and acidic residues.

The protein belongs to the DNA polymerase type-A family. As to quaternary structure, heterotrimer composed of a catalytic subunit and a homodimer of accessory subunits. Requires Mg(2+) as cofactor.

The protein localises to the mitochondrion. Its subcellular location is the mitochondrion matrix. The protein resides in the mitochondrion nucleoid. The enzyme catalyses DNA(n) + a 2'-deoxyribonucleoside 5'-triphosphate = DNA(n+1) + diphosphate. Functionally, involved in the replication of mitochondrial DNA. Associates with mitochondrial DNA. The chain is DNA polymerase subunit gamma-1 (polg) from Xenopus laevis (African clawed frog).